Reading from the N-terminus, the 982-residue chain is Glutamate [NMDA] receptor subunit 1 (982 aa).

A signal peptide spans 1–22 (MRVAFIYRWLLCGAAIVNVLVA). The Extracellular portion of the chain corresponds to 23–568 (QRHTASDNPS…TLVSFLQPFS (546 aa)). 7 N-linked (GlcNAc...) asparagine glycosylation sites follow: Asn253, Asn309, Asn340, Asn392, Asn449, Asn476, and Asn496. Glycine is bound by residues 525 to 527 (PLT) and Arg532. A helical transmembrane segment spans residues 569–589 (NTLWILVMVSVHVVALVLYLL). Over 590-646 (DRFSPFGRFKLSHSDSNEEKALNLSSAVWFAWGVLLNSGIGEGTPRSFSARVLGMVW) the chain is Cytoplasmic. The chain crosses the membrane as a helical span at residues 647 to 667 (AGFAMIIVASYTANLAAFLVL). At 668–826 (ERPKTKLSGI…KTPNTLGLKN (159 aa)) the chain is on the extracellular side. N-linked (GlcNAc...) asparagine glycosylation occurs at Asn688. Positions 698 and 742 each coordinate glycine. Residues 827–847 (MAGVFILVGVGIAGGVGLIII) traverse the membrane as a helical segment. Over 848–982 (EVIYKKHQVK…YTSDVSHLVV (135 aa)) the chain is Cytoplasmic. Residues 948–982 (LTASQLGLGKTRPQQNPLPPRYSPGYTSDVSHLVV) form a disordered region. Residues 972 to 982 (GYTSDVSHLVV) are compositionally biased toward polar residues.

Belongs to the glutamate-gated ion channel (TC 1.A.10.1) family. As to quaternary structure, forms a heteromeric NMDA channel with Nmdar2.

The protein localises to the cell membrane. It is found in the postsynaptic cell membrane. The protein resides in the postsynaptic density. In terms of biological role, NMDA receptor subtype of glutamate-gated ion channels with high calcium permeability and voltage-dependent sensitivity to magnesium. Mediated by glycine. This protein plays a key role in synaptic plasticity, synaptogenesis, excitotoxicity, memory acquisition and learning. It mediates neuronal functions in glutamate neurotransmission. Is involved in the cell surface targeting of NMDA receptors. Plays a role in associative learning and in long-term memory consolidation. The polypeptide is Glutamate [NMDA] receptor subunit 1 (Drosophila grimshawi (Hawaiian fruit fly)).